Here is a 111-residue protein sequence, read N- to C-terminus: Phosphoribosyl-ATP pyrophosphatase (111 aa).

This sequence belongs to the PRA-PH family.

The protein resides in the cytoplasm. It carries out the reaction 1-(5-phospho-beta-D-ribosyl)-ATP + H2O = 1-(5-phospho-beta-D-ribosyl)-5'-AMP + diphosphate + H(+). Its pathway is amino-acid biosynthesis; L-histidine biosynthesis; L-histidine from 5-phospho-alpha-D-ribose 1-diphosphate: step 2/9. In Pseudomonas putida (strain ATCC 700007 / DSM 6899 / JCM 31910 / BCRC 17059 / LMG 24140 / F1), this protein is Phosphoribosyl-ATP pyrophosphatase.